A 3411-amino-acid polypeptide reads, in one-letter code: Genome polyprotein (3411 aa).

The Cytoplasmic segment spans residues 1-104 (MSGRKAQGKT…LSSRKRRSHD (104 aa)). Positions 38-72 (PGPSRGVQGFISFFSFNILTGKKITAHLKRLWKML) are hydrophobic; homodimerization of capsid protein C. The propeptide at 102-121 (SHDVLTVQFLILGMLLMAGG) is ER anchor for the capsid protein C, removed in mature form by serine protease NS3. A helical transmembrane segment spans residues 105–125 (VLTVQFLILGMLLMAGGVTLV). Residues 126-244 (RKNRWLLLNV…GERQLQKIER (119 aa)) lie on the Extracellular side of the membrane. N-linked (GlcNAc...) asparagine; by host glycans are attached at residues Asn134 and Asn150. A helical transmembrane segment spans residues 245-265 (WLVRNPFFAVTALAIAYLVGS). Topologically, residues 266 to 270 (NMTQR) are cytoplasmic. A helical membrane pass occupies residues 271–285 (VVIALLVLAVGPAYS). The Extracellular segment spans residues 286–730 (AHCIGITDRD…TVFGSAFQGL (445 aa)). Intrachain disulfides connect Cys288-Cys315, Cys345-Cys401, Cys345-Cys406, Cys359-Cys390, Cys377-Cys401, Cys377-Cys406, Cys467-Cys568, and Cys585-Cys615. A fusion peptide region spans residues 383 to 396 (DRGWGNGCGLFGKG). Residues 731–751 (FGGLSWITKVIMGAVLIWVGI) form a helical membrane-spanning segment. Residues 752–757 (NTRNMT) lie on the Extracellular side of the membrane. The helical transmembrane segment at 758-778 (MSMSMILVGVIMMFLSLGVGA) threads the bilayer. Topologically, residues 779 to 1132 (DQGCAINFGK…LVRSWVTAGE (354 aa)) are extracellular. Intrachain disulfides connect Cys782-Cys793, Cys833-Cys921, Cys957-Cys1002, Cys1058-Cys1107, Cys1069-Cys1091, and Cys1090-Cys1094. 2 N-linked (GlcNAc...) asparagine; by host glycosylation sites follow: Asn908 and Asn986. A helical membrane pass occupies residues 1133–1153 (IHAVPFGLVSMMIAMEVVLRK). Topologically, residues 1154–1201 (RQGPKQMLVGGMVLLGAMLVGQVTLLDLLKLTMAVGLHFHEMNNGGDA) are cytoplasmic. The chain crosses the membrane as a helical span at residues 1202-1222 (MYMALIAAFSIRPGLLIGFGL). Topologically, residues 1223 to 1287 (RTLWSPRERL…ILPLMALLTP (65 aa)) are lumenal. A helical transmembrane segment spans residues 1288-1308 (VTMAEVRLATMLLCAVVIIGV). Over 1309–1355 (LHQNSKDTSMQKTIPLVALTLTSYLGLTQPFLGLCAFLATRIFGRRS) the chain is Cytoplasmic. The chain crosses the membrane as a helical span at residues 1356-1376 (IPVNEALAAAGLVGVLAGLAF). Residues 1377–1378 (QE) lie on the Lumenal side of the membrane. The helical transmembrane segment at 1379-1399 (MENFLGPIAVGGILMMLVSVA) threads the bilayer. At 1400-1456 (GRVDGLELKKLGEVSWEEEAEISGSSARYDVALSEQGEFKLLSEEKVPWDQVVMTSL) the chain is on the cytoplasmic side. The interacts with and activates NS3 protease stretch occupies residues 1407-1446 (LKKLGEVSWEEEAEISGSSARYDVALSEQGEFKLLSEEKV). The segment at residues 1457 to 1477 (ALVGAAIHPSALLLVLAGWLF) is an intramembrane region (helical). Over 1478–2157 (HVKGARRSGD…RNALSMMPEA (680 aa)) the chain is Cytoplasmic. The Peptidase S7 domain maps to 1485–1665 (SGDVLWDIPT…EVKEEGKEEL (181 aa)). Residues His1537, Asp1561, and Ser1622 each act as charge relay system; for serine protease NS3 activity in the active site. The Helicase ATP-binding domain occupies 1669–1825 (PTMLKKGMTT…HSNGEIEDVQ (157 aa)). Positions 1673–1676 (KKGM) are important for RNA-binding. 1682–1689 (YHPGAGKT) is an ATP binding site. The DEAH box signature appears at 1773–1776 (DEAH). Residues 1820-1997 (EIEDVQTDIP…VRGGMVAPLY (178 aa)) enclose the Helicase C-terminal domain. Lys1877 is modified (N6-acetyllysine; by host). The helical transmembrane segment at 2158–2178 (MTIVMLFILAGLLTSGMVIFF) threads the bilayer. Topologically, residues 2179–2186 (MSPKGISR) are lumenal. An intramembrane region (helical) is located at residues 2187–2207 (MSMAMGTMAGCGYLMFLGGAK). Residues 2208–2209 (PT) are Lumenal-facing. The chain crosses the membrane as a helical span at residues 2210–2230 (HISYIMLIFFVLMVVVIPEPG). Topologically, residues 2231–2241 (QQRSIQDNQVA) are cytoplasmic. The chain crosses the membrane as a helical span at residues 2242-2262 (YLIIGILTLVSVVAANELGML). Residues 2263–2293 (ERTKEDLFGKKNLIPSSASPWSWPDLDLKPG) are Lumenal-facing. Residues 2294-2314 (AAWTVYVGIVTILSPMLHHWI) constitute an intramembrane region (helical). Over 2315–2360 (KVEYGNLSLSGIAQSASVLSFMDKGIPFMKMNISVIILLVSGWNSI) the chain is Lumenal. The chain crosses the membrane as a helical span at residues 2361 to 2380 (TVMPLLCGIGCAMLHWTLIL). Topologically, residues 2381–2421 (PGIKAQQSKLPQRRVFHGVAKNPVVDGNPTVDIEEAPEMPA) are cytoplasmic. The helical transmembrane segment at 2422 to 2442 (LYEKKLALYLLLALSLASVAM) threads the bilayer. The Lumenal segment spans residues 2443 to 2445 (CRT). A helical transmembrane segment spans residues 2446-2466 (PFSLAEGIVLASAALGPLIEG). Residues 2467–3411 (NTSLLWNGPM…DADLQPGELI (945 aa)) lie on the Cytoplasmic side of the membrane. An mRNA cap 0-1 NS5-type MT domain is found at 2507–2771 (GRANGKTLGE…DVILPIGTRS (265 aa)). Ser2562 contributes to the S-adenosyl-L-methionine binding site. Ser2562 is subject to Phosphoserine. Catalysis depends on Lys2567, which acts as the For 2'-O-MTase activity. Gly2592, Trp2593, Thr2610, Leu2611, Asp2637, and Ile2638 together coordinate S-adenosyl-L-methionine. Catalysis depends on Asp2652, which acts as the For 2'-O-MTase activity. Residue Ile2653 participates in S-adenosyl-L-methionine binding. Residues Lys2688 and Glu2724 each act as for 2'-O-MTase activity in the active site. Tyr2726 lines the S-adenosyl-L-methionine pocket. The Nuclear localization signal signature appears at 2878–2911 (RKIMKVVNRWLFRHLAREKNPRLCTKEEFIAKVR). Positions 2945, 2949, 2954, and 2957 each coordinate Zn(2+). A RdRp catalytic domain is found at 3035–3187 (GGFYADDTAG…RPIDDRFGMA (153 aa)). Zn(2+) is bound by residues His3222, Cys3238, and Cys3357.

The protein in the N-terminal section; belongs to the class I-like SAM-binding methyltransferase superfamily. mRNA cap 0-1 NS5-type methyltransferase family. As to quaternary structure, homodimer. Interacts (via N-terminus) with host EXOC1 (via C-terminus); this interaction results in EXOC1 degradation through the proteasome degradation pathway. In terms of assembly, forms heterodimers with envelope protein E in the endoplasmic reticulum and Golgi. Homodimer; in the endoplasmic reticulum and Golgi. Interacts with protein prM. Interacts with non-structural protein 1. As to quaternary structure, homodimer; Homohexamer when secreted. Interacts with envelope protein E. In terms of assembly, interacts (via N-terminus) with serine protease NS3. Forms a heterodimer with serine protease NS3. May form homooligomers. As to quaternary structure, forms a heterodimer with NS2B. Interacts with non-structural protein 2A (via N-terminus). Interacts with NS4B. Interacts with unphosphorylated RNA-directed RNA polymerase NS5; this interaction stimulates RNA-directed RNA polymerase NS5 guanylyltransferase activity. NS3 interacts with host PDCD6IP; this interaction contributes to virion release. In terms of assembly, interacts with serine protease NS3. Homodimer. Interacts with host STAT2; this interaction prevents the establishment of cellular antiviral state. Interacts with serine protease NS3. Interacts with host TRIM23; this interaction leads to NS5 ubiquitination. In terms of processing, specific enzymatic cleavages in vivo yield mature proteins. The nascent capsid protein C contains a C-terminal hydrophobic domain that act as a signal sequence for translocation of prM into the lumen of the ER. Mature capsid protein C is cleaved at a site upstream of this hydrophobic domain by NS3. prM is cleaved in post-Golgi vesicles by a host furin, releasing the mature small envelope protein M, and peptide pr. Non-structural protein 2A-alpha, a C-terminally truncated form of non-structural protein 2A, results from partial cleavage by NS3. Specific enzymatic cleavages in vivo yield mature proteins peptide 2K acts as a signal sequence and is removed from the N-terminus of NS4B by the host signal peptidase in the ER lumen. Signal cleavage at the 2K-4B site requires a prior NS3 protease-mediated cleavage at the 4A-2K site. Cleaved in post-Golgi vesicles by a host furin, releasing the mature small envelope protein M, and peptide pr. This cleavage is incomplete as up to 30% of viral particles still carry uncleaved prM. Post-translationally, N-glycosylated. In terms of processing, N-glycosylated. The excreted form is glycosylated and this is required for efficient secretion of the protein from infected cells. Polyubiquitinated; ubiquitination is probably mediated by host TRIM23 and is prerequisite for NS5-STAT2 interaction. NS5 is not ISGylated or sumoylated. Post-translationally, acetylated by host KAT5. Acetylation modulates NS3 RNA-binding and unwinding activities and plays an important positive role for viral replication. In terms of processing, phosphorylated on serines residues. This phosphorylation may trigger NS5 nuclear localization.

It is found in the virion. The protein localises to the host nucleus. The protein resides in the host cytoplasm. Its subcellular location is the host perinuclear region. It localises to the secreted. It is found in the virion membrane. The protein localises to the host endoplasmic reticulum membrane. The enzyme catalyses Selective hydrolysis of -Xaa-Xaa-|-Yaa- bonds in which each of the Xaa can be either Arg or Lys and Yaa can be either Ser or Ala.. It catalyses the reaction RNA(n) + a ribonucleoside 5'-triphosphate = RNA(n+1) + diphosphate. It carries out the reaction a ribonucleoside 5'-triphosphate + H2O = a ribonucleoside 5'-diphosphate + phosphate + H(+). The catalysed reaction is ATP + H2O = ADP + phosphate + H(+). The enzyme catalyses a 5'-end (5'-triphosphoguanosine)-ribonucleoside in mRNA + S-adenosyl-L-methionine = a 5'-end (N(7)-methyl 5'-triphosphoguanosine)-ribonucleoside in mRNA + S-adenosyl-L-homocysteine. It catalyses the reaction a 5'-end (N(7)-methyl 5'-triphosphoguanosine)-ribonucleoside in mRNA + S-adenosyl-L-methionine = a 5'-end (N(7)-methyl 5'-triphosphoguanosine)-(2'-O-methyl-ribonucleoside) in mRNA + S-adenosyl-L-homocysteine + H(+). Its function is as follows. Plays a role in virus budding by binding to the cell membrane and gathering the viral RNA into a nucleocapsid that forms the core of a mature virus particle. During virus entry, may induce genome penetration into the host cytoplasm after hemifusion induced by the surface proteins. Can migrate to the cell nucleus where it modulates host functions. In terms of biological role, inhibits RNA silencing by interfering with host Dicer. Functionally, prevents premature fusion activity of envelope proteins in trans-Golgi by binding to envelope protein E at pH6.0. After virion release in extracellular space, gets dissociated from E dimers. Acts as a chaperone for envelope protein E during intracellular virion assembly by masking and inactivating envelope protein E fusion peptide. prM is the only viral peptide matured by host furin in the trans-Golgi network probably to avoid catastrophic activation of the viral fusion activity in acidic Golgi compartment prior to virion release. prM-E cleavage is inefficient, and many virions are only partially matured. These uncleaved prM would play a role in immune evasion. Its function is as follows. May play a role in virus budding. Exerts cytotoxic effects by activating a mitochondrial apoptotic pathway through M ectodomain. May display a viroporin activity. In terms of biological role, binds to host cell surface receptor and mediates fusion between viral and cellular membranes. Envelope protein is synthesized in the endoplasmic reticulum in the form of heterodimer with protein prM. They play a role in virion budding in the ER, and the newly formed immature particle is covered with 60 spikes composed of heterodimer between precursor prM and envelope protein E. The virion is transported to the Golgi apparatus where the low pH causes dissociation of PrM-E heterodimers and formation of E homodimers. prM-E cleavage is inefficient, and many virions are only partially matured. These uncleaved prM would play a role in immune evasion. Functionally, involved in immune evasion, pathogenesis and viral replication. Once cleaved off the polyprotein, is targeted to three destinations: the viral replication cycle, the plasma membrane and the extracellular compartment. Essential for viral replication. Required for formation of the replication complex and recruitment of other non-structural proteins to the ER-derived membrane structures. Excreted as a hexameric lipoparticle that plays a role against host immune response. Antagonizing the complement function. Binds to the host macrophages and dendritic cells. Inhibits signal transduction originating from Toll-like receptor 3 (TLR3). Component of the viral RNA replication complex that functions in virion assembly and antagonizes the host immune response. Its function is as follows. Required cofactor for the serine protease function of NS3. May have membrane-destabilizing activity and form viroporins. In terms of biological role, displays three enzymatic activities: serine protease, NTPase and RNA helicase. NS3 serine protease, in association with NS2B, performs its autocleavage and cleaves the polyprotein at dibasic sites in the cytoplasm: C-prM, NS2A-NS2B, NS2B-NS3, NS3-NS4A, NS4A-2K and NS4B-NS5. NS3 RNA helicase binds RNA and unwinds dsRNA in the 3' to 5' direction. Also plays a role in virus assembly. Functionally, regulates the ATPase activity of the NS3 helicase activity. NS4A allows NS3 helicase to conserve energy during unwinding. Functions as a signal peptide for NS4B and is required for the interferon antagonism activity of the latter. Its function is as follows. Induces the formation of ER-derived membrane vesicles where the viral replication takes place. Inhibits interferon (IFN)-induced host STAT1 phosphorylation and nuclear translocation, thereby preventing the establishment of cellular antiviral state by blocking the IFN-alpha/beta pathway. In terms of biological role, replicates the viral (+) and (-) RNA genome, and performs the capping of genomes in the cytoplasm. NS5 methylates viral RNA cap at guanine N-7 and ribose 2'-O positions. Besides its role in RNA genome replication, also prevents the establishment of cellular antiviral state by blocking the interferon-alpha/beta (IFN-alpha/beta) signaling pathway. IFN-I induces binding of NS5 to host IFN-activated transcription factor STAT2, preventing its transcriptional activity. Host TRIM23 is the E3 ligase that interacts with and polyubiquitinates NS5 to promote its binding to STAT2 and trigger IFN-I signaling inhibition. This chain is Genome polyprotein, found in Yellow fever virus (isolate Ivory Coast/85-82H/1982) (YFV).